We begin with the raw amino-acid sequence, 398 residues long: MAKLTVKDLDLKGKKVLVRVDFNVPLKNGVITNDNRISAALPTIKYIIEHGGRAILFSHLGRVKEEADKEGKSLAPVAKNLAEKLGQEVIFPGSTRGAELEAAIDALEDGQVLLVENTRFEDIDGKKESKNDPELGKYWASLGEGIFVNDAFGTAHRTHASNVGISANVEKAVAGFLLENEIAYIKEAVEAPERPFVAILGGSKVSDKIGVIENLLEKADKVLIGGGMTYTFYKAQGIEIGNSLCEEDKLDVAKSLLEKSNGKLILPVDSKEANAFADYTEVKVTEGEAVDAGFLGLDIGPKSIAKFDEALTGAKTVVWNGPMGVFENPDFQEGTIGVMDAIVKQPGVKSIIGGGDSAAAAINLGRADKFSWISTGGGASMELLEGKELPGLAALTEK.

Substrate-binding positions include 21 to 23 (DFN), Arg36, 59 to 62 (HLGR), Arg119, and Arg157. ATP is bound by residues Lys208, Gly296, Glu327, and 354–357 (GGDS).

Belongs to the phosphoglycerate kinase family. In terms of assembly, monomer.

The protein resides in the cytoplasm. The enzyme catalyses (2R)-3-phosphoglycerate + ATP = (2R)-3-phospho-glyceroyl phosphate + ADP. It functions in the pathway carbohydrate degradation; glycolysis; pyruvate from D-glyceraldehyde 3-phosphate: step 2/5. In Streptococcus equi subsp. zooepidemicus (strain MGCS10565), this protein is Phosphoglycerate kinase.